Consider the following 419-residue polypeptide: tRNA modification GTPase MnmE (419 aa).

(6S)-5-formyl-5,6,7,8-tetrahydrofolate contacts are provided by Arg-2, Glu-59, and Arg-99. Positions 197–343 (GLSVVIAGPP…LHTMIVEMAR (147 aa)) constitute a TrmE-type G domain. Residue Asn-207 coordinates K(+). GTP is bound by residues 207–212 (NAGKST), 226–232 (SPVAGTT), and 251–254 (DTAG). Residue Ser-211 coordinates Mg(2+). Residues Ser-226, Val-228, and Thr-231 each coordinate K(+). Residue Thr-232 participates in Mg(2+) binding. Position 419 (Lys-419) interacts with (6S)-5-formyl-5,6,7,8-tetrahydrofolate.

This sequence belongs to the TRAFAC class TrmE-Era-EngA-EngB-Septin-like GTPase superfamily. TrmE GTPase family. Homodimer. Heterotetramer of two MnmE and two MnmG subunits. It depends on K(+) as a cofactor.

The protein resides in the cytoplasm. Its function is as follows. Exhibits a very high intrinsic GTPase hydrolysis rate. Involved in the addition of a carboxymethylaminomethyl (cmnm) group at the wobble position (U34) of certain tRNAs, forming tRNA-cmnm(5)s(2)U34. This chain is tRNA modification GTPase MnmE, found in Sphingopyxis alaskensis (strain DSM 13593 / LMG 18877 / RB2256) (Sphingomonas alaskensis).